The primary structure comprises 430 residues: Trigger factor (430 aa).

A PPIase FKBP-type domain is found at 163–248 (GDVVDVDYKG…LNSIKTSILP (86 aa)).

This sequence belongs to the FKBP-type PPIase family. Tig subfamily.

It is found in the cytoplasm. The catalysed reaction is [protein]-peptidylproline (omega=180) = [protein]-peptidylproline (omega=0). Its function is as follows. Involved in protein export. Acts as a chaperone by maintaining the newly synthesized protein in an open conformation. Functions as a peptidyl-prolyl cis-trans isomerase. In Lawsonia intracellularis (strain PHE/MN1-00), this protein is Trigger factor.